The primary structure comprises 323 residues: Protein translocase subunit SecF (323 aa).

Helical transmembrane passes span G19 to F39, I138 to W158, L162 to F182, E189 to F209, L244 to F264, and L269 to L289.

This sequence belongs to the SecD/SecF family. SecF subfamily. As to quaternary structure, forms a complex with SecD. Part of the essential Sec protein translocation apparatus which comprises SecA, SecYEG and auxiliary proteins SecDF-YajC and YidC.

The protein localises to the cell inner membrane. Its function is as follows. Part of the Sec protein translocase complex. Interacts with the SecYEG preprotein conducting channel. SecDF uses the proton motive force (PMF) to complete protein translocation after the ATP-dependent function of SecA. The sequence is that of Protein translocase subunit SecF from Helicobacter pylori (strain ATCC 700392 / 26695) (Campylobacter pylori).